A 518-amino-acid polypeptide reads, in one-letter code: Calcium-dependent protein kinase 1 (518 aa).

The segment covering 1 to 10 (MGNRTSRHHR) has biased composition (basic residues). The tract at residues 1–49 (MGNRTSRHHRAAPEQPPPQPKPKPQPQQQQQQWPRPQQPTPPPAAAPDA) is disordered. A lipid anchor (N-myristoyl glycine) is attached at Gly-2. Residues 14–25 (EQPPPQPKPKPQ) are compositionally biased toward pro residues. Residues 26–35 (PQQQQQQWPR) are compositionally biased toward low complexity. The span at 36 to 45 (PQQPTPPPAA) shows a compositional bias: pro residues. Residues 66–324 (YTFGRELGRG…SAEILNHPWI (259 aa)) enclose the Protein kinase domain. ATP is bound by residues 72-80 (LGRGQFGVT) and Lys-95. The active-site Proton acceptor is Asp-190. The interval 330–360 (APDKPLDITVISRMKQFRAMNKLKKVALKVV) is autoinhibitory domain. 4 consecutive EF-hand domains span residues 367–402 (EEIT…LGTK), 403–438 (ISES…MNRL), 439–474 (EKED…YDMG), and 475–509 (DDKT…NNPE). Ca(2+) contacts are provided by Asp-380, Asp-382, Ser-384, Thr-386, Glu-391, Asp-416, Asp-418, Asn-420, Thr-422, Glu-427, Asp-452, Asp-454, Ser-456, Tyr-458, Glu-463, Asp-487, Asp-489, Asp-491, Arg-493, and Glu-498.

It belongs to the protein kinase superfamily. Ser/Thr protein kinase family. CDPK subfamily. As to expression, expressed in roots and leaf blades.

Its subcellular location is the membrane. The enzyme catalyses L-seryl-[protein] + ATP = O-phospho-L-seryl-[protein] + ADP + H(+). The catalysed reaction is L-threonyl-[protein] + ATP = O-phospho-L-threonyl-[protein] + ADP + H(+). Its activity is regulated as follows. Activated by calcium. Autophosphorylation may play an important role in the regulation of the kinase activity. May play a role in signal transduction pathways that involve calcium as a second messenger. This Oryza sativa subsp. japonica (Rice) protein is Calcium-dependent protein kinase 1.